The following is a 269-amino-acid chain: Glutamate racemase (269 aa).

Residues 14-15 and 46-47 each bind substrate; these read DS and YS. Residue Cys-78 is the Proton donor/acceptor of the active site. Residue 79-80 participates in substrate binding; the sequence is NT. The Proton donor/acceptor role is filled by Cys-189. 190 to 191 provides a ligand contact to substrate; it reads TH.

Belongs to the aspartate/glutamate racemases family.

It catalyses the reaction L-glutamate = D-glutamate. It participates in cell wall biogenesis; peptidoglycan biosynthesis. In terms of biological role, provides the (R)-glutamate required for cell wall biosynthesis. The chain is Glutamate racemase from Haemophilus influenzae (strain ATCC 51907 / DSM 11121 / KW20 / Rd).